Reading from the N-terminus, the 217-residue chain is tRNA (guanine-N(7)-)-methyltransferase (217 aa).

Residues glutamate 43, aspartate 68, asparagine 101, and asparagine 123 each coordinate S-adenosyl-L-methionine. Residue lysine 127 participates in substrate binding. Residues 129 to 134 (RHNKRR) are interaction with RNA. Residues aspartate 159 and 196-199 (TEYE) contribute to the substrate site.

It belongs to the class I-like SAM-binding methyltransferase superfamily. TrmB family.

The enzyme catalyses guanosine(46) in tRNA + S-adenosyl-L-methionine = N(7)-methylguanosine(46) in tRNA + S-adenosyl-L-homocysteine. It functions in the pathway tRNA modification; N(7)-methylguanine-tRNA biosynthesis. Functionally, catalyzes the formation of N(7)-methylguanine at position 46 (m7G46) in tRNA. The sequence is that of tRNA (guanine-N(7)-)-methyltransferase from Clostridium botulinum (strain 657 / Type Ba4).